The primary structure comprises 475 residues: TOM1-like protein 1 (475 aa).

The 133-residue stretch at A22–P154 folds into the VHS domain. A disordered region spans residues P155–T175. Residues E165–T175 show a composition bias toward polar residues. Phosphoserine is present on S170. Residues E199–R287 enclose the GAT domain. Residues K296 to L317 are disordered. Polar residues predominate over residues T300–S310. Position 313 is a phosphoserine (S313). The interval Y392–F395 is interaction with GRB2. The SH3-binding motif lies at L421–P425. The interaction with PIK3R1 stretch occupies residues Y442–M445. Position 458 is a phosphotyrosine (Y458). The SH2-binding motif lies at Y458 to I461.

This sequence belongs to the TOM1 family. As to quaternary structure, interacts with the SH2 and SH3 domains of FYN when phosphorylated. Also interacts with GRB2 and PIK3R1 when phosphorylated. Interacts with LYN. Phosphorylated on tyrosines by FYN and LYN.

It localises to the golgi apparatus. The protein resides in the golgi stack. It is found in the endosome membrane. Its subcellular location is the cytoplasm. The protein localises to the membrane. Functionally, probable adapter protein involved in signaling pathways. Interacts with the SH2 and SH3 domains of various signaling proteins when it is phosphorylated. May promote FYN activation, possibly by disrupting intramolecular SH3-dependent interactions. This Rattus norvegicus (Rat) protein is TOM1-like protein 1 (Tom1l1).